A 308-amino-acid polypeptide reads, in one-letter code: tRNA dimethylallyltransferase (308 aa).

ATP is bound at residue G16 to T23. T18–T23 serves as a coordination point for substrate. The tract at residues D41 to Q44 is interaction with substrate tRNA.

The protein belongs to the IPP transferase family. Monomer. The cofactor is Mg(2+).

The catalysed reaction is adenosine(37) in tRNA + dimethylallyl diphosphate = N(6)-dimethylallyladenosine(37) in tRNA + diphosphate. Its function is as follows. Catalyzes the transfer of a dimethylallyl group onto the adenine at position 37 in tRNAs that read codons beginning with uridine, leading to the formation of N6-(dimethylallyl)adenosine (i(6)A). This is tRNA dimethylallyltransferase from Myxococcus xanthus (strain DK1622).